The primary structure comprises 30 residues: Cycloviolacin-O24 (30 aa).

A cross-link (cyclopeptide (Gly-Asn)) is located at residues glycine 1–asparagine 30. 3 disulfides stabilise this stretch: cysteine 5-cysteine 19, cysteine 9-cysteine 21, and cysteine 14-cysteine 27.

In terms of processing, this is a cyclic peptide. Expressed in leaves but not in petals, petioles, roots and runners (at protein level).

Probably participates in a plant defense mechanism. Has hemolytic activity. The chain is Cycloviolacin-O24 from Viola odorata (Sweet violet).